Reading from the N-terminus, the 88-residue chain is Putative membrane protein insertion efficiency factor (88 aa).

Positions Leu65–His88 are disordered. Basic and acidic residues predominate over residues Pro69–His80.

The protein belongs to the UPF0161 family.

It is found in the cell membrane. In terms of biological role, could be involved in insertion of integral membrane proteins into the membrane. The chain is Putative membrane protein insertion efficiency factor from Listeria innocua serovar 6a (strain ATCC BAA-680 / CLIP 11262).